The chain runs to 513 residues: t-SNARE domain-containing protein 1 (513 aa).

Disordered regions lie at residues 1–23 (MSYGSIARGGGLGSRGPFGGPSR) and 49–128 (ESKL…KPNF). Positions 7-19 (ARGGGLGSRGPFG) are enriched in gly residues. Ser-378 carries the post-translational modification Phosphoserine. In terms of domain architecture, t-SNARE coiled-coil homology spans 416 to 478 (LEAIRLREEA…EAARQLLAGA (63 aa)). A helical membrane pass occupies residues 491-511 (CFLSAGVTALLVIIIIIATSV).

Its subcellular location is the membrane. This chain is t-SNARE domain-containing protein 1 (TSNARE1), found in Homo sapiens (Human).